Consider the following 712-residue polypeptide: Patatin-like phospholipase domain-containing protein ACLA_029670 (712 aa).

The span at 1-10 (MTSAEKSATR) shows a compositional bias: polar residues. The disordered stretch occupies residues 1-20 (MTSAEKSATRNIYDPSALPD). The chain crosses the membrane as a helical span at residues 85-105 (WPFLFIVFAWITVLGIAYALT). The 192-residue stretch at 275-466 (LCLSGGATFA…RTDIPIKALN (192 aa)) folds into the PNPLA domain. Positions 306–310 (GTSGG) match the GXSXG motif. S308 acts as the Nucleophile in catalysis. Residue D453 is the Proton acceptor of the active site. The span at 649–664 (FPERHSDYKDESHYTE) shows a compositional bias: basic and acidic residues. Residues 649-686 (FPERHSDYKDESHYTEVSDSLSTNSSRPHTPDARRGSI) are disordered. A compositionally biased stretch (polar residues) spans 665-676 (VSDSLSTNSSRP). Residues 677–686 (HTPDARRGSI) are compositionally biased toward basic and acidic residues.

This sequence belongs to the PLPL family.

The protein resides in the membrane. Functionally, probable lipid hydrolase. In Aspergillus clavatus (strain ATCC 1007 / CBS 513.65 / DSM 816 / NCTC 3887 / NRRL 1 / QM 1276 / 107), this protein is Patatin-like phospholipase domain-containing protein ACLA_029670.